Here is a 445-residue protein sequence, read N- to C-terminus: Exodeoxyribonuclease 7 large subunit (445 aa).

It belongs to the XseA family. In terms of assembly, heterooligomer composed of large and small subunits.

It is found in the cytoplasm. It carries out the reaction Exonucleolytic cleavage in either 5'- to 3'- or 3'- to 5'-direction to yield nucleoside 5'-phosphates.. Bidirectionally degrades single-stranded DNA into large acid-insoluble oligonucleotides, which are then degraded further into small acid-soluble oligonucleotides. The chain is Exodeoxyribonuclease 7 large subunit from Staphylococcus aureus (strain USA300 / TCH1516).